The primary structure comprises 401 residues: uncharacterized protein (401 aa).

Residues cysteine 7, cysteine 13, cysteine 16, and cysteine 94 each coordinate [4Fe-4S] cluster. Positions 230, 259, 280, and 328 each coordinate S-adenosyl-L-methionine. Cysteine 355 (nucleophile) is an active-site residue.

This sequence belongs to the class I-like SAM-binding methyltransferase superfamily. RNA M5U methyltransferase family.

This is an uncharacterized protein from Chlamydia pneumoniae (Chlamydophila pneumoniae).